Here is a 444-residue protein sequence, read N- to C-terminus: RAC family serine/threonine-protein kinase homolog (444 aa).

Residues Pro5–Glu100 enclose the PH domain. One can recognise a Protein kinase domain in the interval Phe120–Phe374. Residues Val126–Val134 and Lys149 each bind ATP. Residue Asp243 is the Proton acceptor of the active site. Thr278 carries the phosphothreonine modification. In terms of domain architecture, AGC-kinase C-terminal spans Arg375–Arg444.

This sequence belongs to the protein kinase superfamily. AGC Ser/Thr protein kinase family. RAC subfamily.

The catalysed reaction is L-seryl-[protein] + ATP = O-phospho-L-seryl-[protein] + ADP + H(+). It catalyses the reaction L-threonyl-[protein] + ATP = O-phospho-L-threonyl-[protein] + ADP + H(+). Its function is as follows. Predominantly involved during the aggregation to control cell polarity and chemotaxis. Phosphorylates talB, gefN, gefS, PI4P 5-kinase and gacQ. This Dictyostelium discoideum (Social amoeba) protein is RAC family serine/threonine-protein kinase homolog (pkbA).